The primary structure comprises 306 residues: Aspartate carbamoyltransferase catalytic subunit (306 aa).

Carbamoyl phosphate-binding residues include Arg-55 and Thr-56. Lys-84 lines the L-aspartate pocket. Carbamoyl phosphate is bound by residues Arg-105, His-133, and Gln-136. 2 residues coordinate L-aspartate: Arg-166 and Arg-227. Residues Leu-265 and Pro-266 each coordinate carbamoyl phosphate.

Belongs to the aspartate/ornithine carbamoyltransferase superfamily. ATCase family. In terms of assembly, heterododecamer (2C3:3R2) of six catalytic PyrB chains organized as two trimers (C3), and six regulatory PyrI chains organized as three dimers (R2).

It catalyses the reaction carbamoyl phosphate + L-aspartate = N-carbamoyl-L-aspartate + phosphate + H(+). The protein operates within pyrimidine metabolism; UMP biosynthesis via de novo pathway; (S)-dihydroorotate from bicarbonate: step 2/3. Catalyzes the condensation of carbamoyl phosphate and aspartate to form carbamoyl aspartate and inorganic phosphate, the committed step in the de novo pyrimidine nucleotide biosynthesis pathway. In Neisseria meningitidis serogroup A / serotype 4A (strain DSM 15465 / Z2491), this protein is Aspartate carbamoyltransferase catalytic subunit.